The chain runs to 99 residues: Evasin P1162 (99 aa).

The signal sequence occupies residues 1-28 (MEVKTFAFLQIAVCIAIGIELICAGTNA). 3 cysteine pairs are disulfide-bonded: C40–C59, C44–C61, and C55–C72. 4 N-linked (GlcNAc...) asparagine glycosylation sites follow: N43, N49, N58, and N85.

The protein resides in the secreted. Functionally, salivary chemokine-binding protein which binds to host chemokines CXCL1, CXCL2, CXCL3, CXCL5 and CXCL8. This is Evasin P1162 from Ixodes ricinus (Common tick).